Here is a 195-residue protein sequence, read N- to C-terminus: Thymidylate kinase (195 aa).

Position 7 to 14 (7 to 14) interacts with ATP; it reads GIDGVGKS.

It belongs to the thymidylate kinase family.

It carries out the reaction dTMP + ATP = dTDP + ADP. Its function is as follows. Phosphorylation of dTMP to form dTDP in both de novo and salvage pathways of dTTP synthesis. The polypeptide is Thymidylate kinase (Campylobacter hominis (strain ATCC BAA-381 / DSM 21671 / CCUG 45161 / LMG 19568 / NCTC 13146 / CH001A)).